Here is a 235-residue protein sequence, read N- to C-terminus: Protein Thf1 (235 aa).

Residues 179–228 (LNLSSDKLQKDLDLYRSNVDKMGQLLAVIEDALEAERKKREKAKQEVATT) adopt a coiled-coil conformation.

It belongs to the THF1 family.

Functionally, may be involved in photosynthetic membrane biogenesis. The sequence is that of Protein Thf1 from Rippkaea orientalis (strain PCC 8801 / RF-1) (Cyanothece sp. (strain PCC 8801)).